The following is a 218-amino-acid chain: Ribose-5-phosphate isomerase A (218 aa).

Substrate is bound by residues 28 to 31 (TGST), 81 to 84 (DGAD), and 94 to 97 (KGGG). The Proton acceptor role is filled by glutamate 103. Lysine 121 lines the substrate pocket.

It belongs to the ribose 5-phosphate isomerase family. In terms of assembly, homodimer.

The enzyme catalyses aldehydo-D-ribose 5-phosphate = D-ribulose 5-phosphate. Its pathway is carbohydrate degradation; pentose phosphate pathway; D-ribose 5-phosphate from D-ribulose 5-phosphate (non-oxidative stage): step 1/1. Its function is as follows. Catalyzes the reversible conversion of ribose-5-phosphate to ribulose 5-phosphate. This is Ribose-5-phosphate isomerase A from Vibrio atlanticus (strain LGP32) (Vibrio splendidus (strain Mel32)).